The following is a 418-amino-acid chain: Gamma-glutamyl phosphate reductase (418 aa).

Belongs to the gamma-glutamyl phosphate reductase family.

It localises to the cytoplasm. The catalysed reaction is L-glutamate 5-semialdehyde + phosphate + NADP(+) = L-glutamyl 5-phosphate + NADPH + H(+). The protein operates within amino-acid biosynthesis; L-proline biosynthesis; L-glutamate 5-semialdehyde from L-glutamate: step 2/2. In terms of biological role, catalyzes the NADPH-dependent reduction of L-glutamate 5-phosphate into L-glutamate 5-semialdehyde and phosphate. The product spontaneously undergoes cyclization to form 1-pyrroline-5-carboxylate. The sequence is that of Gamma-glutamyl phosphate reductase from Moorella thermoacetica (strain ATCC 39073 / JCM 9320).